We begin with the raw amino-acid sequence, 254 residues long: tRNA (guanine-N(7)-)-methyltransferase (254 aa).

Residues Glu-82, Glu-107, Asp-134, and Asp-157 each coordinate S-adenosyl-L-methionine. Asp-157 is an active-site residue. Residues Lys-161, Asp-193, and 233–236 (TKFE) contribute to the substrate site.

Belongs to the class I-like SAM-binding methyltransferase superfamily. TrmB family.

The catalysed reaction is guanosine(46) in tRNA + S-adenosyl-L-methionine = N(7)-methylguanosine(46) in tRNA + S-adenosyl-L-homocysteine. It functions in the pathway tRNA modification; N(7)-methylguanine-tRNA biosynthesis. Functionally, catalyzes the formation of N(7)-methylguanine at position 46 (m7G46) in tRNA. The polypeptide is tRNA (guanine-N(7)-)-methyltransferase (Corynebacterium jeikeium (strain K411)).